Reading from the N-terminus, the 359-residue chain is N6-succino-2-amino-2'-deoxyadenylate synthase (359 aa).

The active-site Proton acceptor is the serine 23. The ATP site is built by serine 23, threonine 24, glycine 25, lysine 26, and glycine 27. Serine 23 provides a ligand contact to dGMP. A Mg(2+)-binding site is contributed by serine 23. Asparagine 49 is a binding site for dGMP. Glycine 51, histidine 52, and threonine 53 together coordinate ATP. Glycine 51 provides a ligand contact to Mg(2+). DGMP-binding residues include serine 131, threonine 132, and arginine 146. Glutamine 190 serves as a coordination point for ATP. Residue threonine 205 coordinates dGMP. Threonine 274 serves as a coordination point for Mg(2+). Residues threonine 274, valine 275, and arginine 280 each contribute to the L-aspartate site. Positions 305 and 308 each coordinate ATP.

It belongs to the Caudovirales PurZ family. The cofactor is Mg(2+).

It carries out the reaction dGMP + L-aspartate + ATP = (2S)-2-amino-2'-deoxyadenylo-succinate + ADP + phosphate + 2 H(+). It functions in the pathway purine metabolism. In terms of biological role, involved in the synthesis of the atypical nucleotide dZTP (2-amino-2'-deoxyadenosine-5'-triphosphate). Catalyzes the condensation of aspartate with deoxyguanylate into dSMP (N6-succino-2-amino-2'-deoxyadenylate), which undergoes defumarylation and phosphorylation respectively by host PurB and guanylate/nucleoside diphosphate kinases to give dZTP. dZTP is integrated into the viral genome instead of adenine by the viral DNA polymerase. This Z-base probably completely replaces adenosine and forms a triple bond to the opposite T-base. The resulting non-standard viral DNA is called Z-genome. The chemically modified DNA is probably harder for the host bacteria to digest with nucleases or restriction enzymes. In Cyanophage S-2L (Cyanobacteria phage S-2L), this protein is N6-succino-2-amino-2'-deoxyadenylate synthase.